The sequence spans 736 residues: Exo-oligoalginate lyase (736 aa).

The first 23 residues, M1–A23, serve as a signal peptide directing secretion. Substrate is bound by residues K136, Q146–N149, K198, H202, and Y257–R260. Y258 functions as the Proton donor in the catalytic mechanism. H413 serves as the catalytic Proton acceptor. H415 and D433 together coordinate Zn(2+). R438 is a binding site for substrate. Position 464 (H464) interacts with Zn(2+). A substrate-binding site is contributed by E667.

The protein belongs to the polysaccharide lyase 17 family. Homodimer. Zn(2+) serves as cofactor.

The protein resides in the periplasm. The enzyme catalyses Cleavage of 4-deoxy-alpha-L-erythro-hex-4-enopyranuronoside oligosaccharides into 4-deoxy-alpha-L-erythro-hex-4-enopyranuronate monosaccharides.. In terms of biological role, catalyzes the depolymerization of alginate through an exolytic mode of action, via a beta-elimination mechanism. Preferentially acts on oligoalginates with degrees of polymerization higher than 2 to produce the alginate monomer, 4-deoxy-L-erythro-5-hexoseulose uronic acid. The protein is Exo-oligoalginate lyase of Saccharophagus degradans (strain 2-40 / ATCC 43961 / DSM 17024).